Consider the following 91-residue polypeptide: Small ribosomal subunit protein bS20 (91 aa).

Residues 1–23 (MANTPSAKKRAKQAEKRRSHNAS) form a disordered region. Positions 7–20 (AKKRAKQAEKRRSH) are enriched in basic residues.

The protein belongs to the bacterial ribosomal protein bS20 family.

Its function is as follows. Binds directly to 16S ribosomal RNA. The chain is Small ribosomal subunit protein bS20 from Pseudomonas aeruginosa (strain LESB58).